A 31-amino-acid polypeptide reads, in one-letter code: PGAGSQEERMQGQMEGQDFSHEERFLSMVRE.

Basic and acidic residues-rich tracts occupy residues 1–10 (PGAGSQEERM) and 18–31 (DFSHEERFLSMVRE). Residues 1-31 (PGAGSQEERMQGQMEGQDFSHEERFLSMVRE) form a disordered region.

In terms of assembly, heterodimer; disulfide-linked. Disulfide bonds.

Has antifungal activity against C.gloeosporioides but not against B.cinerea and Fusarium sp. or against various yeasts. Has no antibacterial activity. This is Antifungal protein 1 from Passiflora alata (Winged-stem passion flower).